The chain runs to 447 residues: N-succinylarginine dihydrolase (447 aa).

Substrate-binding positions include 19-28 (AGLSFGNEAS), asparagine 110, and 137-138 (HR). Glutamate 174 is a catalytic residue. Position 212 (arginine 212) interacts with substrate. The active site involves histidine 248. Positions 250 and 359 each coordinate substrate. Cysteine 365 acts as the Nucleophile in catalysis.

This sequence belongs to the succinylarginine dihydrolase family. Homodimer.

The catalysed reaction is N(2)-succinyl-L-arginine + 2 H2O + 2 H(+) = N(2)-succinyl-L-ornithine + 2 NH4(+) + CO2. It participates in amino-acid degradation; L-arginine degradation via AST pathway; L-glutamate and succinate from L-arginine: step 2/5. Its function is as follows. Catalyzes the hydrolysis of N(2)-succinylarginine into N(2)-succinylornithine, ammonia and CO(2). This is N-succinylarginine dihydrolase from Salmonella heidelberg (strain SL476).